Consider the following 166-residue polypeptide: Peptidyl-prolyl cis-trans isomerase-like 1 (166 aa).

Positions 10–164 constitute a PPIase cyclophilin-type domain; sequence QPPNVYLETS…DDVKIIKAYP (155 aa). Cyclosporin A-binding positions include 54–65, 70–71, 99–104, 109–113, Thr119, and Lys125; these read HRIIKDFMIQGG, TG, AMANAG, and GSQFF. A Phosphoserine modification is found at Ser149.

The protein belongs to the cyclophilin-type PPIase family. PPIL1 subfamily. In terms of assembly, identified in the spliceosome C complex. Interacts with SNW1/SKIP. Interacts with CDC40/PRP17; this interaction leads to CDC40 isomerization. Interacts with RBM22.

It localises to the nucleus. It carries out the reaction [protein]-peptidylproline (omega=180) = [protein]-peptidylproline (omega=0). Its activity is regulated as follows. Inhibited by Cyclosporin A. Functionally, involved in pre-mRNA splicing as component of the spliceosome. PPIases accelerate the folding of proteins. It catalyzes the cis-trans isomerization of proline imidic peptide bonds in oligopeptides. Catalyzes prolyl peptide bond isomerization in CDC40/PRP17. Plays an important role in embryonic brain development; this function is independent of its isomerase activity. The sequence is that of Peptidyl-prolyl cis-trans isomerase-like 1 (PPIL1) from Bos taurus (Bovine).